Consider the following 484-residue polypeptide: MNWEIVIGLETHTQLSTDSKIFSGSSTRFGAAPNTQANAVDLALPGSLPVMNRGAAERAILFGLAVGGKVAPRSVFARKNYFYPDLPKGYQISQYELPVVEGGTLSFFVGEEEKTVNLTRAHLEEDAGKSLHDEFSLASGAPASGIDLNRAGTPLLEIVTEPEMRSAAEAVAYARALHSLVVWLGICDGNMQEGSFRCDANVSVRPVGQKEFGTRTEIKNVNSFRFLERAILFEARRQIELIEDGGTVVQETRLYDADRDETRSMRSKEDAHDYRYFPDPDLPPLVIGQDWVDAVRAGMPELPAAQRARFEADYGLPAYDAAQLTVSRAMADYFEAVARALPAGQAKLAANWIMGEVAATLNREEKDIDAAPVSAAALAALINRIIDGTISNKIARDVFAAMWAGENGGDADAIIAARGLKQISDSGAIGAMIDEVLAANPAIVEEYRAGKQKAFNSLVGQIMKAAKGKANPQQVNELLKEKLG.

This sequence belongs to the GatB/GatE family. GatB subfamily. Heterotrimer of A, B and C subunits.

It catalyses the reaction L-glutamyl-tRNA(Gln) + L-glutamine + ATP + H2O = L-glutaminyl-tRNA(Gln) + L-glutamate + ADP + phosphate + H(+). It carries out the reaction L-aspartyl-tRNA(Asn) + L-glutamine + ATP + H2O = L-asparaginyl-tRNA(Asn) + L-glutamate + ADP + phosphate + 2 H(+). Its function is as follows. Allows the formation of correctly charged Asn-tRNA(Asn) or Gln-tRNA(Gln) through the transamidation of misacylated Asp-tRNA(Asn) or Glu-tRNA(Gln) in organisms which lack either or both of asparaginyl-tRNA or glutaminyl-tRNA synthetases. The reaction takes place in the presence of glutamine and ATP through an activated phospho-Asp-tRNA(Asn) or phospho-Glu-tRNA(Gln). In Bordetella bronchiseptica (strain ATCC BAA-588 / NCTC 13252 / RB50) (Alcaligenes bronchisepticus), this protein is Aspartyl/glutamyl-tRNA(Asn/Gln) amidotransferase subunit B.